The following is a 258-amino-acid chain: MAKKFDKDSFSGTLIVVLAVSLICSVIVAGAVVGLKPIQEKQKLQDKQGYILSVAGLMDKDTDIGKTFAERIEQRVVDLATGEYVKDAPKDFSARIAGKDPAQSIRIKPEDDLAGIKSRAKYTEVYLVKGEDGKIGQIILPMHGNGLWSVMYGFVAIQPDGNTINGITYYEQGETPGLGGEIGNPLWQQKFVGKKLFDGQGKLALHVGKGAGSDKEHGVDALSGASLTSKGVQGSFAYWFGENGYIPYLNKLKSAGAQ.

The helical transmembrane segment at Leu14–Gly34 threads the bilayer. An FMN phosphoryl serine modification is found at Ser226.

This sequence belongs to the NqrC family. In terms of assembly, composed of six subunits; NqrA, NqrB, NqrC, NqrD, NqrE and NqrF. FMN serves as cofactor.

The protein localises to the cell inner membrane. The catalysed reaction is a ubiquinone + n Na(+)(in) + NADH + H(+) = a ubiquinol + n Na(+)(out) + NAD(+). In terms of biological role, NQR complex catalyzes the reduction of ubiquinone-1 to ubiquinol by two successive reactions, coupled with the transport of Na(+) ions from the cytoplasm to the periplasm. NqrA to NqrE are probably involved in the second step, the conversion of ubisemiquinone to ubiquinol. This chain is Na(+)-translocating NADH-quinone reductase subunit C, found in Neisseria meningitidis serogroup A / serotype 4A (strain DSM 15465 / Z2491).